Reading from the N-terminus, the 130-residue chain is Mitochondrial pyruvate carrier 1 (130 aa).

The next 2 helical transmembrane spans lie at 23-45 and 55-77; these read LKYIFTTHFWGPVSNFGIPIAAI and ISGPMTFALVTYSGVFMKYALSV.

The protein belongs to the mitochondrial pyruvate carrier (MPC) (TC 2.A.105) family. In terms of assembly, the functional 150 kDa pyruvate import complex is a heteromer of MPC1 and either MPC2 or MPC3.

Its subcellular location is the mitochondrion. It is found in the mitochondrion inner membrane. Its function is as follows. Mediates the uptake of pyruvate into mitochondria. The protein is Mitochondrial pyruvate carrier 1 of Saccharomyces cerevisiae (strain ATCC 204508 / S288c) (Baker's yeast).